The chain runs to 533 residues: Probable nucleolar protein 5-1 (533 aa).

The 119-residue stretch at Ile280–Gly398 folds into the Nop domain. The tract at residues Gly402 to Val533 is disordered. Over residues Pro412–Lys423 the composition is skewed to basic and acidic residues. The segment covering Lys433 to Ser450 has biased composition (polar residues). Basic and acidic residues-rich tracts occupy residues Thr474–Ala489 and Met515–Glu524.

It belongs to the NOP5/NOP56 family.

It localises to the nucleus. The protein localises to the nucleolus. Functionally, required for 60S ribosomal subunit biogenesis. The polypeptide is Probable nucleolar protein 5-1 (NOP5-1) (Arabidopsis thaliana (Mouse-ear cress)).